We begin with the raw amino-acid sequence, 1374 residues long: DNA-directed RNA polymerase subunit beta (1374 aa).

The protein belongs to the RNA polymerase beta chain family. The RNAP catalytic core consists of 2 alpha, 1 beta, 1 beta' and 1 omega subunit. When a sigma factor is associated with the core the holoenzyme is formed, which can initiate transcription.

It carries out the reaction RNA(n) + a ribonucleoside 5'-triphosphate = RNA(n+1) + diphosphate. Its function is as follows. DNA-dependent RNA polymerase catalyzes the transcription of DNA into RNA using the four ribonucleoside triphosphates as substrates. This is DNA-directed RNA polymerase subunit beta from Paracidovorax citrulli (strain AAC00-1) (Acidovorax citrulli).